The sequence spans 127 residues: Large ribosomal subunit protein bL17 (127 aa).

The protein belongs to the bacterial ribosomal protein bL17 family. As to quaternary structure, part of the 50S ribosomal subunit. Contacts protein L32.

The sequence is that of Large ribosomal subunit protein bL17 from Levilactobacillus brevis (strain ATCC 367 / BCRC 12310 / CIP 105137 / JCM 1170 / LMG 11437 / NCIMB 947 / NCTC 947) (Lactobacillus brevis).